Here is a 196-residue protein sequence, read N- to C-terminus: MSAIKITNVAVLHNPAPFVSPFQFEISYECLNSLKDDLEWKLIYVGSAEDETYDQLLESVLVGPVNVGNYRFVFQADPPDPSKIQEEDIIGVTVLLLTCSYMGQEFLRVGYYVNNDYEDEQLKEEPPTKVLIDKVQRNILSDKPRVTKFPIDFHPEEEQTAATAAPPEQSDEQQPNVNGEAQVLPDQSVEPKPEES.

Over residues 146–157 (VTKFPIDFHPEE) the composition is skewed to basic and acidic residues. The interval 146 to 196 (VTKFPIDFHPEEEQTAATAAPPEQSDEQQPNVNGEAQVLPDQSVEPKPEES) is disordered.

It belongs to the ASF1 family. Interacts with histone H3 and histone H4. Component of the HIRA complex made of UBN1, UBN2, ASF1A, CABIN1 and HIRA. Interacts with HIRA. In terms of tissue distribution, expressed in leaves and flower buds.

The protein localises to the nucleus. The protein resides in the nucleolus. Its function is as follows. Histone chaperone that facilitates histone deposition and histone exchange and removal during nucleosome assembly and disassembly. While encoded by a region of the Arabidopsis thaliana genome that is homologous to the Brassica S-locus for self incompatibility, this protein may not play the same role in Arabidopsis thaliana. The polypeptide is Probable histone chaperone ASF1A (ASF1A) (Arabidopsis thaliana (Mouse-ear cress)).